The following is a 146-amino-acid chain: Prolactin-inducible protein homolog (146 aa).

Positions 1 to 28 are cleaved as a signal peptide; the sequence is MHLLQLLFRASPATLLLVLCLQLGANKA. Position 29 is a pyrrolidone carboxylic acid (Q29). 2 disulfide bridges follow: C65-C91 and C89-C123. A glycan (N-linked (GlcNAc...) asparagine) is linked at N105.

This sequence belongs to the PIP family. As to quaternary structure, monomer. Interacts with AZGP1.

Its subcellular location is the secreted. The sequence is that of Prolactin-inducible protein homolog (PIP) from Pongo pygmaeus (Bornean orangutan).